Reading from the N-terminus, the 674-residue chain is Zinc finger protein 750 (674 aa).

The CCHC-type zinc-finger motif lies at 25–51; that stretch reads YKCFQCPFTCNEKSHLFNHMKYGLCKN. Zn(2+) is bound by residues cysteine 27, cysteine 30, histidine 43, and cysteine 49. Disordered regions lie at residues 105-125, 370-466, and 594-674; these read EAKENLDLKNEPKSHAEKTTV, LAKN…QSHS, and TSSP…PRVS. Composition is skewed to polar residues over residues 401–411 and 444–466; these read SPTNFTQSSQG and DSQTIISRENSPSFGNDGVQSHS.

The protein localises to the nucleus. Transcription factor involved in epidermis differentiation. The protein is Zinc finger protein 750 (znf750) of Xenopus laevis (African clawed frog).